Reading from the N-terminus, the 492-residue chain is Catalase isozyme 1 (492 aa).

Catalysis depends on residues histidine 65 and asparagine 138. Tyrosine 348 contacts heme.

Belongs to the catalase family. As to quaternary structure, homotetramer. Heme is required as a cofactor. High expression in seeds and early seedlings.

It is found in the glyoxysome. The catalysed reaction is 2 H2O2 = O2 + 2 H2O. Functionally, occurs in almost all aerobically respiring organisms and serves to protect cells from the toxic effects of hydrogen peroxide. In Cucurbita pepo (Vegetable marrow), this protein is Catalase isozyme 1 (CAT1).